The following is a 230-amino-acid chain: Large ribosomal subunit protein uL1 (230 aa).

This sequence belongs to the universal ribosomal protein uL1 family. As to quaternary structure, part of the 50S ribosomal subunit.

Functionally, binds directly to 23S rRNA. The L1 stalk is quite mobile in the ribosome, and is involved in E site tRNA release. In terms of biological role, protein L1 is also a translational repressor protein, it controls the translation of the L11 operon by binding to its mRNA. The protein is Large ribosomal subunit protein uL1 of Ruminiclostridium cellulolyticum (strain ATCC 35319 / DSM 5812 / JCM 6584 / H10) (Clostridium cellulolyticum).